We begin with the raw amino-acid sequence, 1548 residues long: Lysine-specific demethylase 5D (1548 aa).

In terms of domain architecture, JmjN spans Cys-14–Pro-55. In terms of domain architecture, ARID spans Thr-79–Ser-169. Glycyl lysine isopeptide (Lys-Gly) (interchain with G-Cter in SUMO2) cross-links involve residues Lys-205, Lys-229, Lys-244, and Lys-279. The tract at residues Cys-208–Lys-229 is disordered. Phosphoserine is present on residues Ser-300 and Ser-316. The PHD-type 1 zinc finger occupies Val-325–Ile-371. Tyr-439 serves as a coordination point for 2-oxoglutarate. Residues Glu-467–Arg-633 enclose the JmjC domain. Positions 513 and 515 each coordinate Fe cation. Residues Ser-521, Asn-523, and Lys-531 each coordinate 2-oxoglutarate. Residue His-601 coordinates Fe cation. The C5HC2 zinc finger occupies Cys-706–Met-758. Phosphoserine is present on residues Ser-889 and Ser-893. Residue Lys-1123 forms a Glycyl lysine isopeptide (Lys-Gly) (interchain with G-Cter in SUMO2) linkage. The PHD-type 2 zinc finger occupies Ile-1182–Met-1243. Ser-1355 carries the phosphoserine modification. The tract at residues Lys-1438 to Glu-1468 is disordered.

This sequence belongs to the JARID1 histone demethylase family. Interacts withPCGF6, MSH5, ZMYND8, AR. L-ascorbate serves as cofactor. The cofactor is Fe(2+).

The protein localises to the nucleus. The catalysed reaction is N(6),N(6),N(6)-trimethyl-L-lysyl(4)-[histone H3] + 3 2-oxoglutarate + 3 O2 = L-lysyl(4)-[histone H3] + 3 formaldehyde + 3 succinate + 3 CO2. Histone demethylase that specifically demethylates 'Lys-4' of histone H3, thereby playing a central role in histone code. Does not demethylate histone H3 'Lys-9', H3 'Lys-27', H3 'Lys-36', H3 'Lys-79' or H4 'Lys-20'. Demethylates trimethylated and dimethylated but not monomethylated H3 'Lys-4'. May play a role in spermatogenesis. Involved in transcriptional repression of diverse metastasis-associated genes; in this function seems to cooperate with ZMYND8. Suppresses prostate cancer cell invasion. Regulates androgen receptor (AR) transcriptional activity by demethylating H3K4me3 active transcription marks. The chain is Lysine-specific demethylase 5D (Kdm5d) from Mus musculus (Mouse).